The chain runs to 185 residues: uncharacterized protein (185 aa).

The first 24 residues, 1–24 (MPCNRAVFGAFVLALLISLQSVYF), serve as a signal peptide directing secretion. A helical transmembrane segment spans residues 50–70 (VAVNVIVEFSFDILFFLCGLL). The segment covering 96–113 (ELEHVSSRRRNDSRDDST) has biased composition (basic and acidic residues). The segment at 96 to 185 (ELEHVSSRRR…LFTAGGIGLP (90 aa)) is disordered. Polar residues predominate over residues 114 to 126 (VRNVSKTSPLASQ). Residues 127 to 138 (RSRDHFDGDPRE) are compositionally biased toward basic and acidic residues. The segment covering 139-155 (PAPPAYSPADFYPPPAS) has biased composition (pro residues).

The protein resides in the host membrane. This is an uncharacterized protein from Colorado tick fever virus (strain USA/Florio N-7180) (CTFV).